The primary structure comprises 122 residues: MIQMQTNLDVADNSGARRVMCIKVLGGSKRKYASVGDIIVVSVKDAIPRGRVKKGDVMKAVVVRTAKDIRRADGSVIRFDSNAAVLVDNKKEPIGTRIFGPVPRELRGRNHMKIISLAPEVL.

It belongs to the universal ribosomal protein uL14 family. As to quaternary structure, part of the 50S ribosomal subunit. Forms a cluster with proteins L3 and L19. In the 70S ribosome, L14 and L19 interact and together make contacts with the 16S rRNA in bridges B5 and B8.

Functionally, binds to 23S rRNA. Forms part of two intersubunit bridges in the 70S ribosome. The sequence is that of Large ribosomal subunit protein uL14 from Bartonella quintana (strain Toulouse) (Rochalimaea quintana).